The primary structure comprises 135 residues: RxLR effector protein Avr10 (135 aa).

The first 19 residues, 1–19, serve as a signal peptide directing secretion; sequence MRLSFIIFAISLLAGGSGA. A compositionally biased stretch (polar residues) spans 34-43; the sequence is GTNQGASTGK. The segment at 34-64 is disordered; that stretch reads GTNQGASTGKRSLRYDNNAERAGEEDDEERA. Residues 44 to 63 carry the RxLR-dEER motif; that stretch reads RSLRYDNNAERAGEEDDEER. Residues 46–55 are compositionally biased toward basic and acidic residues; the sequence is LRYDNNAERA.

It belongs to the RxLR effector family.

Its subcellular location is the secreted. The protein localises to the host nucleus. It is found in the host cytoplasm. Functionally, secreted effector that acts as an elicitor of hypersensitive response (HR) specifically on plants carrying defense protein R10. Enhances P.infestans colonization of Nicotiana benthamiana leaves. The polypeptide is RxLR effector protein Avr10 (Phytophthora infestans (strain T30-4) (Potato late blight agent)).